A 593-amino-acid polypeptide reads, in one-letter code: Pyruvate decarboxylase 1 (593 aa).

Polar residues predominate over residues 1–19; it reads METETETPNGSTPCPTSAP. The segment at 1 to 20 is disordered; it reads METETETPNGSTPCPTSAPS. Substrate contacts are provided by Asp-55 and His-142. The segment at 420-502 is thiamine pyrophosphate binding; it reads DSWFNCQKLR…FLINNGGYTI (83 aa). Mg(2+)-binding residues include Asp-470, Asn-497, and Gly-499. Glu-503 is a substrate binding site.

Belongs to the TPP enzyme family. In terms of assembly, homotetramer. A metal cation serves as cofactor. It depends on thiamine diphosphate as a cofactor.

The catalysed reaction is a 2-oxocarboxylate + H(+) = an aldehyde + CO2. This Pisum sativum (Garden pea) protein is Pyruvate decarboxylase 1 (PDC1).